Consider the following 213-residue polypeptide: mRNA-decapping protein OPG121 (213 aa).

N(7)-methyl-GTP-binding residues include glutamate 16 and arginine 50. The 180-residue stretch at 30-209 (KDTHVFAACI…EYLSYIYNML (180 aa)) folds into the Nudix hydrolase domain. Positions 111–132 (GKLDKKESIKDCLRRELKEESD) match the Nudix box motif. Glutamate 126 (nucleophile) is an active-site residue. Glutamate 126 and glutamate 130 together coordinate Mg(2+). Residue aspartate 151 participates in N(7)-methyl-GTP binding. Glutamate 183 provides a ligand contact to Mg(2+).

It belongs to the Nudix hydrolase family. It depends on Mg(2+) as a cofactor. The cofactor is Mn(2+).

The enzyme catalyses a 5'-end (N(7)-methyl 5'-triphosphoguanosine)-guanosine in mRNA + H2O = a 5'-end phospho-guanosine in mRNA + N(7)-methyl-GDP + 2 H(+). Its function is as follows. Decapping enzyme that remove the protective 5'-cap from both host and viral mRNAs to commit transcripts for decay by the cellular exonuclease XRN1. Accelerates viral and cellular mRNA turnover to eliminate competing host mRNAs and allow stage-specific synthesis of viral proteins. Acceleration of the turnover of cellular transcripts may even promote the shutoff of host protein synthesis. This is mRNA-decapping protein OPG121 (OPG121) from Vaccinia virus (strain Western Reserve) (VACV).